Reading from the N-terminus, the 119-residue chain is Aspartate 1-decarboxylase (119 aa).

The Schiff-base intermediate with substrate; via pyruvic acid role is filled by Ser25. Ser25 is subject to Pyruvic acid (Ser). Thr57 contacts substrate. Tyr58 serves as the catalytic Proton donor. Residue 73–75 (GAA) participates in substrate binding.

It belongs to the PanD family. Heterooctamer of four alpha and four beta subunits. Pyruvate serves as cofactor. Post-translationally, is synthesized initially as an inactive proenzyme, which is activated by self-cleavage at a specific serine bond to produce a beta-subunit with a hydroxyl group at its C-terminus and an alpha-subunit with a pyruvoyl group at its N-terminus.

Its subcellular location is the cytoplasm. It carries out the reaction L-aspartate + H(+) = beta-alanine + CO2. It functions in the pathway cofactor biosynthesis; (R)-pantothenate biosynthesis; beta-alanine from L-aspartate: step 1/1. Its function is as follows. Catalyzes the pyruvoyl-dependent decarboxylation of aspartate to produce beta-alanine. The chain is Aspartate 1-decarboxylase from Ruthia magnifica subsp. Calyptogena magnifica.